A 365-amino-acid polypeptide reads, in one-letter code: Peptide chain release factor 2 (365 aa).

Residue Q252 is modified to N5-methylglutamine.

Belongs to the prokaryotic/mitochondrial release factor family. In terms of processing, methylated by PrmC. Methylation increases the termination efficiency of RF2.

The protein resides in the cytoplasm. Functionally, peptide chain release factor 2 directs the termination of translation in response to the peptide chain termination codons UGA and UAA. This Yersinia pseudotuberculosis serotype O:1b (strain IP 31758) protein is Peptide chain release factor 2.